The chain runs to 381 residues: Homoserine O-succinyltransferase (381 aa).

Positions Asn-45–Asp-360 constitute an AB hydrolase-1 domain. Ser-151 acts as the Nucleophile in catalysis. Residue Arg-221 participates in substrate binding. Catalysis depends on residues Asp-321 and His-354. Asp-355 contacts substrate.

Belongs to the AB hydrolase superfamily. MetX family. Homodimer.

It is found in the cytoplasm. The enzyme catalyses L-homoserine + succinyl-CoA = O-succinyl-L-homoserine + CoA. The protein operates within amino-acid biosynthesis; L-methionine biosynthesis via de novo pathway; O-succinyl-L-homoserine from L-homoserine: step 1/1. Functionally, transfers a succinyl group from succinyl-CoA to L-homoserine, forming succinyl-L-homoserine. The protein is Homoserine O-succinyltransferase of Burkholderia vietnamiensis (strain G4 / LMG 22486) (Burkholderia cepacia (strain R1808)).